A 210-amino-acid chain; its full sequence is Uridine kinase (210 aa).

ATP is bound at residue 12–19 (GGSGSGKT).

Belongs to the uridine kinase family.

The protein localises to the cytoplasm. It catalyses the reaction uridine + ATP = UMP + ADP + H(+). The catalysed reaction is cytidine + ATP = CMP + ADP + H(+). It functions in the pathway pyrimidine metabolism; CTP biosynthesis via salvage pathway; CTP from cytidine: step 1/3. It participates in pyrimidine metabolism; UMP biosynthesis via salvage pathway; UMP from uridine: step 1/1. This chain is Uridine kinase, found in Leuconostoc citreum (strain KM20).